A 185-amino-acid polypeptide reads, in one-letter code: Threonylcarbamoyl-AMP synthase (185 aa).

The YrdC-like domain maps to 4-185; sequence SWRVQQAAQD…IATAQIVRAG (182 aa).

It belongs to the SUA5 family. TsaC subfamily.

Its subcellular location is the cytoplasm. The enzyme catalyses L-threonine + hydrogencarbonate + ATP = L-threonylcarbamoyladenylate + diphosphate + H2O. In terms of biological role, required for the formation of a threonylcarbamoyl group on adenosine at position 37 (t(6)A37) in tRNAs that read codons beginning with adenine. Catalyzes the conversion of L-threonine, HCO(3)(-)/CO(2) and ATP to give threonylcarbamoyl-AMP (TC-AMP) as the acyladenylate intermediate, with the release of diphosphate. The sequence is that of Threonylcarbamoyl-AMP synthase from Pseudomonas syringae pv. syringae (strain B728a).